The sequence spans 706 residues: Protein argonaute (706 aa).

The tract at residues 1-108 is N-terminal domain; it reads MGKEALLNLY…ELFRDFLTKT (108 aa). The tract at residues 109-165 is linker L1; the sequence is KVKDKFISDFYKKFRDKITVQGKNRKIALIPEVNEKVLKSEEGYFLLHLDLKFRIQP. The region spanning 168–259 is the PAZ domain; the sequence is TLQTLLERND…YPATILKPVL (92 aa). A linker L2 region spans residues 263–334; sequence NLEDEERNEV…AKGKNTKVIT (72 aa). The interval 335 to 448 is mid domain; it reads NLRKFLELCR…YDFVKRELLK (114 aa). One can recognise a Piwi domain in the interval 419–694; sequence LVIVFLEEYP…ITKLMLRGIE (276 aa). The interval 449 to 706 is PIWI domain; it reads KMIPSQVILN…KKEGDIMYWL (258 aa). Residues Asp502, Glu541, and Asp571 contribute to the active site. Asp502 contacts Mn(2+). Asp571 is a binding site for Mn(2+). The segment at 612–650 is PIWI box; sequence FIKGYFYKLSEDSVILATYNQVYEGTHQPIKVRKVYGEL. Asp683 is an active-site residue. Asp683 contacts Mn(2+).

It belongs to the argonaute family. Long pAgo subfamily. Mg(2+) is required as a cofactor.

Its function is as follows. A DNA-guided RNA endonuclease. Uses short ssDNA sequences as guides (gDNA) to bind complementary target strands, resulting in cleavage of the target RNA. The cleavage site is 10 nucleotides downstream of the residue base paired with the 5'-end of the gDNA. Binds ssDNA better than ssRNA, binds dsDNA and DNA-RNA hybrids but does not bind dsRNA. A 2 nucleotide 3'-overhang (possibly on the guide strand) may help load nucleic acids into the complex. In Aquifex aeolicus (strain VF5), this protein is Protein argonaute.